Here is a 295-residue protein sequence, read N- to C-terminus: Thioredoxin-related transmembrane protein 2 (295 aa).

Positions 1-48 are cleaved as a signal peptide; sequence MAVLAPLIALVYSVPRLSRWLARPYCLLSALLSIAFLLVRKLPPICNG. Over 49–102 the chain is Extracellular; the sequence is LPTQREDGNPCDFDWREVEILMFLSAIVMMKNRRSITVEQHVGNIFMFSKVANA. A helical membrane pass occupies residues 103–125; sequence ILFFRLDIRMGLLYLTLCIVFLM. Residues 114-269 enclose the Thioredoxin domain; sequence LLYLTLCIVF…LYQRAKKHSK (156 aa). Topologically, residues 126–295 are cytoplasmic; it reads TCKPPLYMGP…VPDGENKKDK (170 aa). Phosphoserine is present on residues serine 211 and serine 243. Residues 266 to 295 form a disordered region; that stretch reads KHSKGGDMSEEKPVDPAPTTVPDGENKKDK. Basic and acidic residues predominate over residues 269–279; that stretch reads KGGDMSEEKPV. Positions 292-295 match the Di-lysine motif motif; that stretch reads KKDK.

In terms of assembly, monomer. Homodimer; disulfide-linked. Occurs in both reduced and oxidized monomeric form. Oxidative conditions increase homodimerization. Interacts with CANX. Interacts with ATP2A2.

The protein resides in the endoplasmic reticulum membrane. Its subcellular location is the mitochondrion membrane. Its function is as follows. Endoplasmic reticulum and mitochondria-associated protein that probably functions as a regulator of cellular redox state and thereby regulates protein post-translational modification, protein folding and mitochondrial activity. Indirectly regulates neuronal proliferation, migration, and organization in the developing brain. In Mus musculus (Mouse), this protein is Thioredoxin-related transmembrane protein 2 (Tmx2).